The sequence spans 177 residues: Putative membrane protein 165 (177 aa).

The Intravirion portion of the chain corresponds to 1-7 (MYLVLLI). Residues 8–24 (AVILFIIVILMIFLISG) traverse the membrane as a helical segment. Topologically, residues 25-166 (LFYPEQEPAL…DPHPALKSKN (142 aa)) are virion surface.

It belongs to the asfivirus envelope protein p22 family.

Its subcellular location is the virion membrane. The protein localises to the host cell membrane. The chain is Putative membrane protein 165 from African swine fever virus (isolate Pig/Kenya/KEN-50/1950) (ASFV).